The primary structure comprises 322 residues: Cysteine protease yopT1 (322 aa).

Residues Cys-139, His-258, and Asp-274 contribute to the active site.

This sequence belongs to the peptidase C58 family. As to quaternary structure, interacts with human ARHA.

It localises to the secreted. Its function is as follows. Cysteine protease, which is translocated into infected cells and plays a central role in pathogenesis by cleaving the C-terminus end of the human small GTPase RhoA/ARHA, a regulator of cytoskeleton. Once cleaved, ARHA loses its lipid modification, and is released from the cell membrane, leading to the subsequent disruption of actin cytoskeleton of the host cell. This chain is Cysteine protease yopT1 (yopT1), found in Yersinia enterocolitica.